Reading from the N-terminus, the 131-residue chain is Large ribosomal subunit protein bL12 (131 aa).

This sequence belongs to the bacterial ribosomal protein bL12 family. In terms of assembly, homodimer. Part of the ribosomal stalk of the 50S ribosomal subunit. Forms a multimeric L10(L12)X complex, where L10 forms an elongated spine to which 2 to 4 L12 dimers bind in a sequential fashion. Binds GTP-bound translation factors.

Its function is as follows. Forms part of the ribosomal stalk which helps the ribosome interact with GTP-bound translation factors. Is thus essential for accurate translation. This chain is Large ribosomal subunit protein bL12, found in Prochlorococcus marinus (strain MIT 9301).